Consider the following 259-residue polypeptide: Ribosomal RNA small subunit methyltransferase J (259 aa).

Residues 101 to 102, 117 to 118, 153 to 154, and Asp-176 contribute to the S-adenosyl-L-methionine site; these read RD, ER, and SS.

This sequence belongs to the methyltransferase superfamily. RsmJ family.

It is found in the cytoplasm. The catalysed reaction is guanosine(1516) in 16S rRNA + S-adenosyl-L-methionine = N(2)-methylguanosine(1516) in 16S rRNA + S-adenosyl-L-homocysteine + H(+). Functionally, specifically methylates the guanosine in position 1516 of 16S rRNA. This is Ribosomal RNA small subunit methyltransferase J from Vibrio vulnificus (strain CMCP6).